The chain runs to 85 residues: N.vectensis toxin 6 (85 aa).

Positions 1–20 are cleaved as a signal peptide; the sequence is MISFKTVIVCLFLWVVIIGA. Cystine bridges form between Cys46-Cys82, Cys48-Cys71, and Cys64-Cys83.

Probable toxin. This Nematostella vectensis (Starlet sea anemone) protein is N.vectensis toxin 6.